The primary structure comprises 215 residues: UPF0502 protein YceH (215 aa).

This sequence belongs to the UPF0502 family.

The polypeptide is UPF0502 protein YceH (Salmonella heidelberg (strain SL476)).